We begin with the raw amino-acid sequence, 1379 residues long: ATPase histone chaperone YTA7 (1379 aa).

2 disordered regions span residues 1-39 and 54-243; these read MARN…TTTR and DFLE…NSRN. The residue at position 2 (Ala-2) is an N-acetylalanine. A phosphoserine mark is found at Ser-11 and Ser-17. Over residues 61-78 the composition is skewed to basic and acidic residues; sequence VMDKDETPVDVTSDEHHN. Position 94 is a phosphoserine (Ser-94). The span at 97 to 110 shows a compositional bias: basic and acidic residues; it reads ENARTNEELTNERN. 2 stretches are compositionally biased toward acidic residues: residues 119–152 and 170–184; these read PEED…DEDS and DPDD…DEEG. A compositionally biased stretch (basic residues) spans 192 to 207; the sequence is SSKRLKRANSRRTRSS. Position 212 is a phosphothreonine (Thr-212). Residues 218-228 show a composition bias toward basic residues; the sequence is RALRSRTRHSR. Position 229 is a phosphothreonine (Thr-229). Phosphoserine occurs at positions 241, 259, and 285. The tract at residues 302 to 330 is disordered; sequence NPSPARRGRGGWNASQNSGPTRRLFPTGG. A phosphoserine mark is found at Ser-367, Ser-369, and Ser-370. The disordered stretch occupies residues 375–396; sequence LPLGVTPKTKKENTQKKKKKKP. The interval 450–578 is AAA-ATPase; required for its chromatin boundary function; that stretch reads VLFHGPPGTG…PALRRPGRFD (129 aa). Position 454–461 (454–461) interacts with ATP; it reads GPPGTGKT. Ser-735 bears the Phosphoserine mark. Residues 974-1101 enclose the Bromo domain; that stretch reads RLKNVLKIKL…ANAQMGIEEI (128 aa). Phosphoserine is present on Ser-1142. Disordered regions lie at residues 1233–1274 and 1291–1316; these read TCTS…ANTN and LHET…GKKS. Positions 1244–1254 are enriched in basic and acidic residues; the sequence is ERARKEPKENE. Ser-1256 carries the post-translational modification Phosphoserine. The segment covering 1256 to 1274 has biased composition (polar residues); that stretch reads SLQTQVTEENFSKIDANTN. Residues 1293–1316 are compositionally biased toward basic and acidic residues; sequence ETVEKRERSPIPKEVVEPEQGKKS.

It belongs to the AAA ATPase family. As to quaternary structure, interacts with CSE4/CENP-A. Interacts with SCM3. Interacts with SPT16. Interacts with POB3. Interacts with the casein kinase II complex subunits CKA1, CKA2, CKB1 and CKB2. Interacts with RNA polymerase II. Interacts (via Bromo domain) with histone H3. Interacts (via Bromo domain) with histone H4. In terms of processing, phosphorylated by CDK1 and casein kinase II during S-phase, which leads to its eviction from histone gene promoters and promotes histone gene transcription.

It localises to the chromosome. Its subcellular location is the centromere. It is found in the nucleus. In terms of biological role, functions as an ATP-dependent nucleosome disassembly factor that helps evict canonical histone H3 from the 5'-end of genes upon their induction. Also contributes to kinetochore assembly by cooperating with SCM3 to load the histone H3 variant CSE4/CENP-A at centromeres. Provides a chromatin boundary function at the 5'-end of genes that restricts access by RTT106 and thus prevents ectopic spreading of repressive chromatin into coding regions. Also prevents heterochromatin spreading downstream of the silent mating-type locus HMR, this function is independent of the tRNA boundary element. Contributes to appropriate cell cycle regulation of histone gene expression by recruiting RNA polymerase II to histone genes, and subsequent CDK1- and casein kinase II-dependent eviction from chromatin is required to promote transcriptional elongation. The polypeptide is ATPase histone chaperone YTA7 (Saccharomyces cerevisiae (strain ATCC 204508 / S288c) (Baker's yeast)).